The sequence spans 439 residues: Paraneoplastic antigen-like protein 8A (439 aa).

Residues 208–439 (SALKAETPNN…RRATNESRKV (232 aa)) form a disordered region. The segment covering 231–249 (LVRRAGAKSRSRRKKQKKN) has biased composition (basic residues). 3 stretches are compositionally biased toward basic and acidic residues: residues 314–326 (GPRE…RAEA), 395–404 (SRREASDQKA), and 423–439 (AKPE…SRKV).

This sequence belongs to the PNMA family.

The protein is Paraneoplastic antigen-like protein 8A of Homo sapiens (Human).